Reading from the N-terminus, the 101-residue chain is MKTKLKIGDSVKILSGKDKGRIGKIASINRKKNKVIVESCNMVKKVIKARTPQEKGKIIDKEAAIDISNVMIFVKGTSSRLGIRFENNEKIRYLKKNGQRI.

The protein belongs to the universal ribosomal protein uL24 family. Part of the 50S ribosomal subunit.

In terms of biological role, one of two assembly initiator proteins, it binds directly to the 5'-end of the 23S rRNA, where it nucleates assembly of the 50S subunit. Functionally, one of the proteins that surrounds the polypeptide exit tunnel on the outside of the subunit. This is Large ribosomal subunit protein uL24 from Borreliella afzelii (strain PKo) (Borrelia afzelii).